Consider the following 651-residue polypeptide: Beta-glucuronidase (651 aa).

Positions 1–22 (MARGSAVAWAALGPLLWGCALG) are cleaved as a signal peptide. 3 N-linked (GlcNAc...) asparagine glycosylation sites follow: Asn-173, Asn-272, and Asn-420. Glu-451 acts as the Proton donor in catalysis. Asn-631 is a glycosylation site (N-linked (GlcNAc...) asparagine).

It belongs to the glycosyl hydrolase 2 family. As to quaternary structure, homotetramer. In terms of processing, N-linked glycosylated with 3 to 4 oligosaccharide chains.

The protein resides in the lysosome. It catalyses the reaction a beta-D-glucuronoside + H2O = D-glucuronate + an alcohol. Its activity is regulated as follows. Inhibited by L-aspartic acid. Its function is as follows. Plays an important role in the degradation of dermatan and keratan sulfates. This chain is Beta-glucuronidase (GUSB), found in Homo sapiens (Human).